We begin with the raw amino-acid sequence, 428 residues long: GTPase Obg (428 aa).

The Obg domain occupies 1–158; it reads MFVDQVQVEV…RFIKLELKVL (158 aa). The region spanning 159–333 is the OBG-type G domain; it reads ADVGLVGFPS…LMHKTAEVLK (175 aa). Residues 165–172, 190–194, 212–215, 282–285, and 314–316 each bind GTP; these read GFPSVGKS, FTTLV, DLPG, TKMD, and SSL. 2 residues coordinate Mg(2+): serine 172 and threonine 192. In terms of domain architecture, OCT spans 350–428; that stretch reads YKYQPEPALK…IDDFTFEFVE (79 aa).

It belongs to the TRAFAC class OBG-HflX-like GTPase superfamily. OBG GTPase family. Monomer. Mg(2+) is required as a cofactor.

It localises to the cytoplasm. Functionally, an essential GTPase which binds GTP, GDP and possibly (p)ppGpp with moderate affinity, with high nucleotide exchange rates and a fairly low GTP hydrolysis rate. Plays a role in control of the cell cycle, stress response, ribosome biogenesis and in those bacteria that undergo differentiation, in morphogenesis control. The chain is GTPase Obg from Lacticaseibacillus paracasei (strain ATCC 334 / BCRC 17002 / CCUG 31169 / CIP 107868 / KCTC 3260 / NRRL B-441) (Lactobacillus paracasei).